Consider the following 684-residue polypeptide: Glycine--tRNA ligase beta subunit (684 aa).

Belongs to the class-II aminoacyl-tRNA synthetase family. As to quaternary structure, tetramer of two alpha and two beta subunits.

Its subcellular location is the cytoplasm. It catalyses the reaction tRNA(Gly) + glycine + ATP = glycyl-tRNA(Gly) + AMP + diphosphate. The protein is Glycine--tRNA ligase beta subunit of Pseudomonas fluorescens (strain SBW25).